The following is a 149-amino-acid chain: MRVILQKDVINLGDAGDLKEVADGYARNFLFPKRLAVRANEGNTKAALHQKKLGELKREKRKKAMEDVGGNLNGKEYEILVKTGGGEKLFGAVTPIDVASILKKNGFELDKRKIEIAEPIRNLGSYKIKIRLAEGIQPTITLHVKKEEE.

The protein belongs to the bacterial ribosomal protein bL9 family.

Binds to the 23S rRNA. The protein is Large ribosomal subunit protein bL9 of Leptospira interrogans serogroup Icterohaemorrhagiae serovar copenhageni (strain Fiocruz L1-130).